Reading from the N-terminus, the 493-residue chain is Protein kinase PINOID 2 (493 aa).

The tract at residues 1–53 (MAAIKEESDYDSSRSSLTAPDSRRSWISDIGSSSSVSARSFGGDTPASSCRYK) is disordered. Residues 27–44 (ISDIGSSSSVSARSFGGD) are compositionally biased toward low complexity. One can recognise a Protein kinase domain in the interval 80–443 (FRLVRRLGSG…SAEVKRHPFF (364 aa)). Residues 86–94 (LGSGDLGNV) and Lys120 contribute to the ATP site. The active-site Proton acceptor is Asp216. Over residues 295-306 (GGGAAAGNNGDG) the composition is skewed to gly residues. Disordered stretches follow at residues 295-320 (GGGAAAGNNGDGDGNDEEAETETAEP) and 458-493 (EVPAPPAPAPKKVMTMSKKERQEPYNYRPENHFDYF). A compositionally biased stretch (acidic residues) spans 307–319 (DGNDEEAETETAE). Residues 444–493 (KGVNWALVRSVRPPEVPAPPAPAPKKVMTMSKKERQEPYNYRPENHFDYF) form the AGC-kinase C-terminal domain. Positions 474–493 (SKKERQEPYNYRPENHFDYF) are enriched in basic and acidic residues.

Belongs to the protein kinase superfamily. Ser/Thr protein kinase family.

It catalyses the reaction L-seryl-[protein] + ATP = O-phospho-L-seryl-[protein] + ADP + H(+). The catalysed reaction is L-threonyl-[protein] + ATP = O-phospho-L-threonyl-[protein] + ADP + H(+). Serine/threonine-protein kinase involved in the regulation of auxin signaling. This Oryza sativa subsp. japonica (Rice) protein is Protein kinase PINOID 2 (PID2).